A 1289-amino-acid chain; its full sequence is Outer capsid protein lambda-2 (1289 aa).

893-900 (GAAAAGKS) is a binding site for ATP.

This sequence belongs to the orthoreovirus lambda-2 protein family. As to quaternary structure, interacts with protein mu-NS; in viral inclusions.

Its subcellular location is the virion. It catalyses the reaction a 5'-end diphospho-ribonucleoside in mRNA + GTP + H(+) = a 5'-end (5'-triphosphoguanosine)-ribonucleoside in mRNA + diphosphate. It carries out the reaction a 5'-end (5'-triphosphoguanosine)-ribonucleoside in mRNA + S-adenosyl-L-methionine = a 5'-end (N(7)-methyl 5'-triphosphoguanosine)-ribonucleoside in mRNA + S-adenosyl-L-homocysteine. In terms of biological role, outer capsid protein involved in mRNA capping. Catalyzes the last 3 enzymatic activities for formation of the 5' cap structure on the viral plus-strand transcripts, namely the RNA guanylyltransferase, RNA-7N- and RNA-2'O-methyltransferase activities. The polypeptide is Outer capsid protein lambda-2 (L2) (Reovirus type 1 (strain Lang) (T1L)).